Reading from the N-terminus, the 353-residue chain is Protein CYTOKININ-RESPONSIVE GATA TRANSCRIPTION FACTOR 1 (353 aa).

A Nuclear localization signal 1 motif is present at residues 137–144; sequence IRKGAATD. A disordered region spans residues 142–166; the sequence is ATDPEGGAVRKPRRRAQAHQDESQQ. The GATA-type zinc-finger motif lies at 178-203; sequence CSDCNTTKTPLWRSGPCGPKSLCNAC. Positions 244–251 match the Nuclear localization signal 2 motif; that stretch reads EKRAADVD.

The protein belongs to the type IV zinc-finger family. Class B subfamily. As to expression, mostly expressed in leaves and stems, and, at low levels, in roots.

The protein localises to the nucleus. Its function is as follows. Transcriptional regulator that specifically binds 5'-GATA-3' or 5'-GAT-3' motifs within gene promoters. Influences the expression of nuclear encoded chloroplast-targeted genes. Regulates chloroplast development and promotes chlorophyll accumulation. Modulates plant architecture (e.g. height, length and width of leaf blades, and flowering tillers production) and represses tillering, probably by modulating number of cells. Promotes senescence. Involved in grain filling, panicle development and starch production. This chain is Protein CYTOKININ-RESPONSIVE GATA TRANSCRIPTION FACTOR 1, found in Oryza sativa subsp. japonica (Rice).